The following is a 211-amino-acid chain: ATP phosphoribosyltransferase (211 aa).

Belongs to the ATP phosphoribosyltransferase family. Short subfamily. As to quaternary structure, heteromultimer composed of HisG and HisZ subunits.

The protein resides in the cytoplasm. The enzyme catalyses 1-(5-phospho-beta-D-ribosyl)-ATP + diphosphate = 5-phospho-alpha-D-ribose 1-diphosphate + ATP. It functions in the pathway amino-acid biosynthesis; L-histidine biosynthesis; L-histidine from 5-phospho-alpha-D-ribose 1-diphosphate: step 1/9. In terms of biological role, catalyzes the condensation of ATP and 5-phosphoribose 1-diphosphate to form N'-(5'-phosphoribosyl)-ATP (PR-ATP). Has a crucial role in the pathway because the rate of histidine biosynthesis seems to be controlled primarily by regulation of HisG enzymatic activity. This Pseudomonas paraeruginosa (strain DSM 24068 / PA7) (Pseudomonas aeruginosa (strain PA7)) protein is ATP phosphoribosyltransferase.